Here is a 342-residue protein sequence, read N- to C-terminus: Fructose-1,6-bisphosphatase class 1 (342 aa).

Glu91, Asp113, Leu115, and Asp116 together coordinate Mg(2+). Residues 116-119 (DGSS), Asn211, and Lys277 contribute to the substrate site. Glu283 is a binding site for Mg(2+).

This sequence belongs to the FBPase class 1 family. As to quaternary structure, homotetramer. Requires Mg(2+) as cofactor.

The protein resides in the cytoplasm. The enzyme catalyses beta-D-fructose 1,6-bisphosphate + H2O = beta-D-fructose 6-phosphate + phosphate. It functions in the pathway carbohydrate biosynthesis; gluconeogenesis. In Bordetella petrii (strain ATCC BAA-461 / DSM 12804 / CCUG 43448), this protein is Fructose-1,6-bisphosphatase class 1.